The primary structure comprises 565 residues: Efflux pump aunC (565 aa).

The span at 1–14 (MSDTARISGGSFTS) shows a compositional bias: polar residues. The disordered stretch occupies residues 1–57 (MSDTARISGGSFTSPPGRDVELNSFKEASQTRLYPYSSRKEEEGREDEQQRPEREED). Over residues 38 to 54 (SRKEEEGREDEQQRPER) the composition is skewed to basic and acidic residues. The next 14 membrane-spanning stretches (helical) occupy residues 59-79 (GALTGYKLVLVTVGLCFCIFC), 103-123 (DVGWYASAYLLTTCAVTLPFG), 128-148 (FFPIKWVYLSALFVFELGSFI), 164-184 (VAGLGGGGLFSGSLLIITQCV), 194-214 (GFIMSIFAVASVIAPLMGGAF), 222-242 (WCFYINLPFGLVSAVVIFFTF), 257-277 (AAGLDPLGTATFLPAIVCLLL), 293-313 (IIALFTLFGVLLACFVGLQLW), 335-355 (LYGFCLNGAMFTFVYYLPIWF), 378-398 (VIFAIISGVLVSATGYFGPFM), 399-419 (LLSAAMASIAAGLLSMLHPSS), 425-445 (IGYQVLLGSSIGMGFQLPVFV), 457-477 (TATALMTFIQLLGGAIFVSVA), and 530-550 (VHTFYLAIGLAAASFLAATVI).

It belongs to the major facilitator superfamily. TCR/Tet family.

It is found in the cell membrane. Functionally, efflux pump; part of the gene cluster that mediates the biosynthesis of aurasperone B, a dimeric gamma-naphthopyrone. This chain is Efflux pump aunC, found in Aspergillus niger (strain ATCC MYA-4892 / CBS 513.88 / FGSC A1513).